We begin with the raw amino-acid sequence, 464 residues long: DNA primase DnaG (464 aa).

One can recognise a Toprim domain in the interval 200–274 (DSIIVVEGRA…DVDYVARAPE (75 aa)). Residues glutamate 206, aspartate 248, and aspartate 250 each coordinate Mg(2+). Over residues 322 to 332 (NGREEKVREVK) the composition is skewed to basic and acidic residues. Positions 322 to 359 (NGREEKVREVKPPAPAPAPAPAPKPIEKPEPKEREEKI) are disordered. Positions 333-345 (PPAPAPAPAPAPK) are enriched in pro residues. Residues 346 to 359 (PIEKPEPKEREEKI) are compositionally biased toward basic and acidic residues.

It belongs to the archaeal DnaG primase family. Forms a ternary complex with MCM helicase and DNA. Component of the archaeal exosome complex. Requires Mg(2+) as cofactor.

The catalysed reaction is ssDNA + n NTP = ssDNA/pppN(pN)n-1 hybrid + (n-1) diphosphate.. In terms of biological role, RNA polymerase that catalyzes the synthesis of short RNA molecules used as primers for DNA polymerase during DNA replication. Also part of the exosome, which is a complex involved in RNA degradation. Acts as a poly(A)-binding protein that enhances the interaction between heteromeric, adenine-rich transcripts and the exosome. This Thermococcus onnurineus (strain NA1) protein is DNA primase DnaG.